The chain runs to 276 residues: Borealin (276 aa).

The segment at 111–158 (KEAKSSANSEDENMAPLKSTMKKKKASKKAPSTSKKPRTLSISKQGGT) is disordered.

This sequence belongs to the borealin family. Component of the CPC complex.

Its subcellular location is the nucleus. It localises to the chromosome. The protein resides in the centromere. It is found in the cytoplasm. The protein localises to the cytoskeleton. Its subcellular location is the spindle. Functionally, component of the chromosomal passenger complex (CPC), a complex that acts as a key regulator of mitosis. The CPC complex has essential functions at the centromere in ensuring correct chromosome alignment and segregation and is required for chromatin-induced microtubule stabilization and spindle assembly. The sequence is that of Borealin (cdca8) from Danio rerio (Zebrafish).